The primary structure comprises 238 residues: MIESFSRLTQAGPGSPRRATVQAAASGLGSADDQVFSRLLENRIVFLGSVVEDAVANAISAKLLLLAAEDPAADIYLYINSPGGSVSAGMAIYDTMQYVGNDVATVALGLAGSMGQFLLCAGTAGKRYALPHARIMMHQPHGGIGGTAADISIQAEQMLYTKRTLQERIAFHTGQTVEQIETDSDRDRWFTAEEAKEYGLVDHVVVRADQVPSVVSGAGMGLRRAGRTGFGPGGGSGR.

Ser113 (nucleophile) is an active-site residue. Residue His138 is part of the active site.

This sequence belongs to the peptidase S14 family. As to quaternary structure, fourteen ClpP subunits assemble into 2 heptameric rings which stack back to back to give a disk-like structure with a central cavity, resembling the structure of eukaryotic proteasomes.

Its subcellular location is the cytoplasm. It catalyses the reaction Hydrolysis of proteins to small peptides in the presence of ATP and magnesium. alpha-casein is the usual test substrate. In the absence of ATP, only oligopeptides shorter than five residues are hydrolyzed (such as succinyl-Leu-Tyr-|-NHMec, and Leu-Tyr-Leu-|-Tyr-Trp, in which cleavage of the -Tyr-|-Leu- and -Tyr-|-Trp bonds also occurs).. In terms of biological role, cleaves peptides in various proteins in a process that requires ATP hydrolysis. Has a chymotrypsin-like activity. Plays a major role in the degradation of misfolded proteins. The sequence is that of ATP-dependent Clp protease proteolytic subunit 4 from Frankia casuarinae (strain DSM 45818 / CECT 9043 / HFP020203 / CcI3).